The chain runs to 312 residues: tRNA-cytidine(32) 2-sulfurtransferase (312 aa).

The short motif at 48–53 (SGGKDS) is the PP-loop motif element. [4Fe-4S] cluster contacts are provided by Cys123, Cys126, and Cys214.

This sequence belongs to the TtcA family. Homodimer. The cofactor is Mg(2+). [4Fe-4S] cluster is required as a cofactor.

Its subcellular location is the cytoplasm. The catalysed reaction is cytidine(32) in tRNA + S-sulfanyl-L-cysteinyl-[cysteine desulfurase] + AH2 + ATP = 2-thiocytidine(32) in tRNA + L-cysteinyl-[cysteine desulfurase] + A + AMP + diphosphate + H(+). Its pathway is tRNA modification. Its function is as follows. Catalyzes the ATP-dependent 2-thiolation of cytidine in position 32 of tRNA, to form 2-thiocytidine (s(2)C32). The sulfur atoms are provided by the cysteine/cysteine desulfurase (IscS) system. The chain is tRNA-cytidine(32) 2-sulfurtransferase from Mannheimia succiniciproducens (strain KCTC 0769BP / MBEL55E).